An 842-amino-acid polypeptide reads, in one-letter code: Serine/threonine-protein kinase CLA4 (842 aa).

The segment at 12-34 (DNDFQNIGPAPRPPSSNSQGRTC) is disordered. Phosphoserine is present on residues Ser29 and Ser46. In terms of domain architecture, PH spans 61–179 (SKKKSGWVSY…WLDAIFAKCP (119 aa)). Residues 184 to 197 (VSSPTNFTHKVHVG) form the CRIB domain. Residues 247–274 (GNPTNTLDKPQSGETSSSQKSLPNSYND) show a composition bias toward polar residues. The interval 247-524 (GNPTNTLDKP…KPKKPARPTM (278 aa)) is disordered. The segment covering 279–296 (NNSVNSKSSSGVSSSMVS) has biased composition (low complexity). The span at 297-307 (QRKTSQPPNTK) shows a compositional bias: polar residues. The segment covering 308–319 (SPVSLGSGSLPP) has biased composition (low complexity). The segment covering 323–343 (KLPTSQSNIPRHLQNVPNQQY) has biased composition (polar residues). Residues Ser351 and Ser367 each carry the phosphoserine modification. Low complexity predominate over residues 372 to 387 (QQQQQQQQQQKQQHQQ). Residues 396–408 (SPSPSPSPSPLNP) show a composition bias toward pro residues. Residues 418–435 (PYSKQPQSPLSSQSTQNQ) are compositionally biased toward low complexity. Residue Ser425 is modified to Phosphoserine. 2 stretches are compositionally biased toward polar residues: residues 470 to 481 (PSNQNATSNTHV) and 488 to 497 (NDQSTPQTMR). In terms of domain architecture, Protein kinase spans 546–825 (FKVIEKAGQG…TEELLHHGFF (280 aa)). ATP-binding positions include 552-560 (AGQGASGSV) and Lys594. Asp693 functions as the Proton acceptor in the catalytic mechanism.

Belongs to the protein kinase superfamily. STE Ser/Thr protein kinase family. STE20 subfamily. As to quaternary structure, interacts with CDC42.

The catalysed reaction is L-seryl-[protein] + ATP = O-phospho-L-seryl-[protein] + ADP + H(+). The enzyme catalyses L-threonyl-[protein] + ATP = O-phospho-L-threonyl-[protein] + ADP + H(+). In terms of biological role, involved in budding and cytokinesis. In Saccharomyces cerevisiae (strain ATCC 204508 / S288c) (Baker's yeast), this protein is Serine/threonine-protein kinase CLA4 (CLA4).